A 201-amino-acid chain; its full sequence is Small ribosomal subunit protein uS4 (201 aa).

Positions 26 to 47 are disordered; it reads LSKKNYPPGQHGNNRRRKTSEY. One can recognise an S4 RNA-binding domain in the interval 92 to 154; it reads ARLDNVVFRL…SKSLEVIADA (63 aa).

It belongs to the universal ribosomal protein uS4 family. In terms of assembly, part of the 30S ribosomal subunit. Contacts protein S5. The interaction surface between S4 and S5 is involved in control of translational fidelity.

In terms of biological role, one of the primary rRNA binding proteins, it binds directly to 16S rRNA where it nucleates assembly of the body of the 30S subunit. Functionally, with S5 and S12 plays an important role in translational accuracy. The chain is Small ribosomal subunit protein uS4 from Porphyromonas gingivalis (strain ATCC 33277 / DSM 20709 / CIP 103683 / JCM 12257 / NCTC 11834 / 2561).